Reading from the N-terminus, the 231-residue chain is Small ribosomal subunit protein uS3 (231 aa).

The 70-residue stretch at 39 to 108 (IKNYIKKRYK…EISISVLEVK (70 aa)) folds into the KH type-2 domain.

Belongs to the universal ribosomal protein uS3 family. In terms of assembly, part of the 30S ribosomal subunit. Forms a tight complex with proteins S10 and S14.

Functionally, binds the lower part of the 30S subunit head. Binds mRNA in the 70S ribosome, positioning it for translation. In Aquifex pyrophilus, this protein is Small ribosomal subunit protein uS3.